Reading from the N-terminus, the 110-residue chain is Putative zinc finger protein ORF110 (110 aa).

The C2H2-type zinc-finger motif lies at 3-26; sequence YVCTACKLKFHTFEEFKIHVHLFH.

The polypeptide is Putative zinc finger protein ORF110 (Acidianus filamentous virus 1 (isolate United States/Yellowstone) (AFV-1)).